The sequence spans 149 residues: Large ribosomal subunit protein uL13 (149 aa).

It belongs to the universal ribosomal protein uL13 family. As to quaternary structure, part of the 50S ribosomal subunit.

Functionally, this protein is one of the early assembly proteins of the 50S ribosomal subunit, although it is not seen to bind rRNA by itself. It is important during the early stages of 50S assembly. The chain is Large ribosomal subunit protein uL13 from Cyanothece sp. (strain PCC 7425 / ATCC 29141).